Consider the following 342-residue polypeptide: Holliday junction branch migration complex subunit RuvB (342 aa).

Residues 1–184 (MEENFDIREQ…FGINLHLEYY (184 aa)) form a large ATPase domain (RuvB-L) region. Residues leucine 23, arginine 24, glycine 65, lysine 68, threonine 69, threonine 70, 131 to 133 (EDY), arginine 174, tyrosine 184, and arginine 221 each bind ATP. Threonine 69 provides a ligand contact to Mg(2+). The segment at 185 to 255 (DDDVLTSIIR…IARFALEALN (71 aa)) is small ATPAse domain (RuvB-S). Positions 258–342 (RYGLDEIDNK…YNSQKTLFDD (85 aa)) are head domain (RuvB-H). Residues arginine 313 and arginine 318 each coordinate DNA.

Belongs to the RuvB family. As to quaternary structure, homohexamer. Forms an RuvA(8)-RuvB(12)-Holliday junction (HJ) complex. HJ DNA is sandwiched between 2 RuvA tetramers; dsDNA enters through RuvA and exits via RuvB. An RuvB hexamer assembles on each DNA strand where it exits the tetramer. Each RuvB hexamer is contacted by two RuvA subunits (via domain III) on 2 adjacent RuvB subunits; this complex drives branch migration. In the full resolvosome a probable DNA-RuvA(4)-RuvB(12)-RuvC(2) complex forms which resolves the HJ.

It is found in the cytoplasm. It catalyses the reaction ATP + H2O = ADP + phosphate + H(+). In terms of biological role, the RuvA-RuvB-RuvC complex processes Holliday junction (HJ) DNA during genetic recombination and DNA repair, while the RuvA-RuvB complex plays an important role in the rescue of blocked DNA replication forks via replication fork reversal (RFR). RuvA specifically binds to HJ cruciform DNA, conferring on it an open structure. The RuvB hexamer acts as an ATP-dependent pump, pulling dsDNA into and through the RuvAB complex. RuvB forms 2 homohexamers on either side of HJ DNA bound by 1 or 2 RuvA tetramers; 4 subunits per hexamer contact DNA at a time. Coordinated motions by a converter formed by DNA-disengaged RuvB subunits stimulates ATP hydrolysis and nucleotide exchange. Immobilization of the converter enables RuvB to convert the ATP-contained energy into a lever motion, pulling 2 nucleotides of DNA out of the RuvA tetramer per ATP hydrolyzed, thus driving DNA branch migration. The RuvB motors rotate together with the DNA substrate, which together with the progressing nucleotide cycle form the mechanistic basis for DNA recombination by continuous HJ branch migration. Branch migration allows RuvC to scan DNA until it finds its consensus sequence, where it cleaves and resolves cruciform DNA. The protein is Holliday junction branch migration complex subunit RuvB of Phocaeicola vulgatus (strain ATCC 8482 / DSM 1447 / JCM 5826 / CCUG 4940 / NBRC 14291 / NCTC 11154) (Bacteroides vulgatus).